A 297-amino-acid polypeptide reads, in one-letter code: PDZ domain-containing protein GIPC3 (297 aa).

The PDZ domain maps to 97–177; that stretch reads EVEVTKTEDA…SQPFTLRLVQ (81 aa).

It belongs to the GIPC family. In terms of tissue distribution, expressed in adult lung, brain and testis. In the inner ear, it is expressed in the inner and outer hair cells of the organ of Corti. Also expressed in cochlear spiral ganglion neurons.

In terms of biological role, required for postnatal maturation of the hair bundle and long-term survival of hair cells and spiral ganglion. This is PDZ domain-containing protein GIPC3 (Gipc3) from Mus musculus (Mouse).